We begin with the raw amino-acid sequence, 172 residues long: MLSFLQNPRQAAAQVLNFALILSTAFMMWKGLSVASDSPSPIVVVLSGSMEPAFQRGDLLFLWNRNLLEETKVGEIVVYNVKGKDIPIVHRLVRKFGAGPKAKLLTKGDNNVADDTELYARGQDYIEREDIIGSVVGYIPFVGYVTILLSEHPWLKTVMLGMMGLVVVLQRE.

Residues 1–14 lie on the Cytoplasmic side of the membrane; that stretch reads MLSFLQNPRQAAAQ. Residues 15–35 traverse the membrane as a helical; Signal-anchor for type II membrane protein segment; that stretch reads VLNFALILSTAFMMWKGLSVA. The Lumenal portion of the chain corresponds to 36-172; the sequence is SDSPSPIVVV…MGLVVVLQRE (137 aa). Residues S49, H90, and D115 each act as charge relay system in the active site. The interval 158 to 169 is C-terminal short (CTS) helix; it reads VMLGMMGLVVVL.

Belongs to the peptidase S26B family. In terms of assembly, component of the signal peptidase complex (SPC) composed of a catalytic subunit SEC11 and three accessory subunits SPC1, SPC2 and SPC3. The complex induces a local thinning of the ER membrane which is used to measure the length of the signal peptide (SP) h-region of protein substrates. This ensures the selectivity of the complex towards h-regions shorter than 18-20 amino acids. SPC associates with the translocon complex.

Its subcellular location is the endoplasmic reticulum membrane. The catalysed reaction is Cleavage of hydrophobic, N-terminal signal or leader sequences from secreted and periplasmic proteins.. Its function is as follows. Catalytic component of the signal peptidase complex (SPC) which catalyzes the cleavage of N-terminal signal sequences from nascent proteins as they are translocated into the lumen of the endoplasmic reticulum. Specifically cleaves N-terminal signal peptides that contain a hydrophobic alpha-helix (h-region) shorter than 18-20 amino acids. The chain is Signal peptidase complex catalytic subunit sec11 (sec11) from Sclerotinia sclerotiorum (strain ATCC 18683 / 1980 / Ss-1) (White mold).